A 203-amino-acid chain; its full sequence is Cilia- and flagella-associated protein 20 (203 aa).

Belongs to the CFAP20 family.

The protein resides in the nucleus. Its subcellular location is the cytoplasm. It is found in the cytoskeleton. It localises to the microtubule organizing center. The protein localises to the centrosome. The protein resides in the centriole. Its subcellular location is the cilium basal body. It is found in the cilium axoneme. Functionally, cilium- and flagellum-specific protein that plays a role in axonemal structure organization and motility. Microtubule inner protein (MIP) part of the dynein-decorated doublet microtubules (DMTs) in cilia axoneme, which is required for motile cilia beating. Involved in the regulation of the size and morphology of cilia. Required for axonemal microtubules polyglutamylation. In Caenorhabditis elegans, this protein is Cilia- and flagella-associated protein 20.